The following is a 257-amino-acid chain: Transcription factor MYB4 (257 aa).

HTH myb-type domains are found at residues 9–61 and 62–116; these read KMGL…INYL and RPDI…KKRL. 2 DNA-binding regions (H-T-H motif) span residues 37–61 and 89–112; these read WRAL…INYL and WSAI…HTHL. The disordered stretch occupies residues 115 to 179; that stretch reads RLDAPAQGGH…VAEEHGNAGI (65 aa). The segment covering 130–140 has biased composition (basic residues); it reads GKKHKKPKSAK. Over residues 141-170 the composition is skewed to low complexity; that stretch reads KPAAAAAAPPASPERSASSSVTESSMASSV.

It localises to the nucleus. Its function is as follows. Transcriptional activator involved in cold stress response. Regulates positively the expression of genes involved in reactive oxygen species (ROS) scavenging such as peroxidase and superoxide dismutase during cold stress. Transactivates a complex gene network that have major effects on stress tolerance and panicle development. The chain is Transcription factor MYB4 from Oryza sativa subsp. japonica (Rice).